We begin with the raw amino-acid sequence, 327 residues long: MIDDIKNVSVVIPVYNEEESLPVLIERTLAACRKIGKPWEIILVDDGSNDRSAELLTEAASDPEKHIIAVLLNRNYGQHSAIMAGFQQAVGDVVITLDADLQNPPEEIPRLVEYASQGYDVVGTVRANRQDSLFRKLASKTINMMIRRSTGKSMADYGCMLRAYRRHIVSAMLRCHERSTFIPILANTFARKTIEIDVLHAEREFGTSKYSFLKLINLMYDLLTCLTTTPLRILSLIGSVVALSGFLLALLLIGLRLFFGAEWAAEGVFTLFAVLFMFIGAQFVGMGLLGEYIGRIYTDVRARPRYFVQKTVSAATPLTTSLRDEEE.

The next 2 membrane-spanning stretches (helical) occupy residues 233-253 (ILSLIGSVVALSGFLLALLLI) and 268-288 (VFTLFAVLFMFIGAQFVGMGL).

It belongs to the glycosyltransferase 2 family.

It is found in the cell inner membrane. The enzyme catalyses UDP-4-deoxy-4-formamido-beta-L-arabinose + di-trans,octa-cis-undecaprenyl phosphate = 4-deoxy-4-formamido-alpha-L-arabinopyranosyl di-trans,octa-cis-undecaprenyl phosphate + UDP. It participates in glycolipid biosynthesis; 4-amino-4-deoxy-alpha-L-arabinose undecaprenyl phosphate biosynthesis; 4-amino-4-deoxy-alpha-L-arabinose undecaprenyl phosphate from UDP-4-deoxy-4-formamido-beta-L-arabinose and undecaprenyl phosphate: step 1/2. The protein operates within bacterial outer membrane biogenesis; lipopolysaccharide biosynthesis. Catalyzes the transfer of 4-deoxy-4-formamido-L-arabinose from UDP to undecaprenyl phosphate. The modified arabinose is attached to lipid A and is required for resistance to polymyxin and cationic antimicrobial peptides. The chain is Undecaprenyl-phosphate 4-deoxy-4-formamido-L-arabinose transferase from Pectobacterium atrosepticum (strain SCRI 1043 / ATCC BAA-672) (Erwinia carotovora subsp. atroseptica).